A 347-amino-acid chain; its full sequence is GMP reductase (347 aa).

108–131 (ADFEKTKQILDLNPALNFVCIDVA) contacts NADP(+). G181 and G183 together coordinate K(+). C186 acts as the Thioimidate intermediate in catalysis. Residue 216-239 (IVSDGGCTTPGDVAKAFGGGADFV) coordinates NADP(+).

The protein belongs to the IMPDH/GMPR family. GuaC type 1 subfamily. As to quaternary structure, homotetramer.

It carries out the reaction IMP + NH4(+) + NADP(+) = GMP + NADPH + 2 H(+). Its function is as follows. Catalyzes the irreversible NADPH-dependent deamination of GMP to IMP. It functions in the conversion of nucleobase, nucleoside and nucleotide derivatives of G to A nucleotides, and in maintaining the intracellular balance of A and G nucleotides. The sequence is that of GMP reductase from Shigella boydii serotype 18 (strain CDC 3083-94 / BS512).